We begin with the raw amino-acid sequence, 330 residues long: G-protein coupled receptor 157 (330 aa).

The Extracellular portion of the chain corresponds to 1 to 15 (MPSPAPPTELLPWER). The chain crosses the membrane as a helical span at residues 16 to 36 (AVVLLSCALSALGSGLLVATH). Over 37-48 (ALWPDLRSRARR) the chain is Cytoplasmic. A helical membrane pass occupies residues 49–69 (LLLFLSLADLLSAASYFYGVL). Residues 70-87 (QDFAGTSWDCVLQGALST) lie on the Extracellular side of the membrane. The helical transmembrane segment at 88–108 (FANTSSFFWTVAIALYLYLSI) threads the bilayer. Over 109-119 (VRTTRGPSTDH) the chain is Cytoplasmic. Residues 120 to 140 (LIWAFHLISWGVPLAITVAAV) form a helical membrane-spanning segment. At 141–166 (SLKKIGYDASDVSVGWCWINLEAEDR) the chain is on the extracellular side. Residues 167–187 (VLWMLLTGKLWEMLAYILLPL) traverse the membrane as a helical segment. The Cytoplasmic segment spans residues 188-227 (LYLLVRKHINRAHQALSEYRPICEGRQLQRGSSTSTADKK). The helical transmembrane segment at 228-248 (LVLIPLIFICLRVWSTVRFVL) threads the bilayer. At 249 to 259 (TLCGSPAVQTP) the chain is on the extracellular side. Residues 260–280 (VLVVLHGIGNTFQGGANCIMF) traverse the membrane as a helical segment. Topologically, residues 281–330 (VLCTRAVRTRLFSLCCCCPRPSTQSPPGAPTPPKIGESQESRRTPEVPST) are cytoplasmic. The tract at residues 301–330 (PSTQSPPGAPTPPKIGESQESRRTPEVPST) is disordered. Positions 317-330 (ESQESRRTPEVPST) are enriched in basic and acidic residues.

Belongs to the G-protein coupled receptor 2 family. Expressed in the primary cilia of radial glial progenitors (RGPs) in the developing neocortex.

The protein resides in the cell projection. Its subcellular location is the cilium membrane. Its function is as follows. Orphan receptor that promotes neuronal differentiation of radial glial progenitors (RGPs). The activity of this receptor is mediated by a G(q)-protein that activates a phosphatidylinositol-calcium second messenger. The polypeptide is G-protein coupled receptor 157 (Gpr157) (Mus musculus (Mouse)).